The chain runs to 292 residues: Shikimate dehydrogenase (NADP(+)) (292 aa).

Shikimate contacts are provided by residues 25-27 (SKS) and threonine 72. Lysine 76 acts as the Proton acceptor in catalysis. Shikimate contacts are provided by asparagine 97 and aspartate 113. Residues 137–141 (GAGGA), 161–166 (NRTQSK), and methionine 230 contribute to the NADP(+) site. Tyrosine 232 serves as a coordination point for shikimate. Glycine 254 is a binding site for NADP(+).

It belongs to the shikimate dehydrogenase family. As to quaternary structure, homodimer.

It catalyses the reaction shikimate + NADP(+) = 3-dehydroshikimate + NADPH + H(+). It participates in metabolic intermediate biosynthesis; chorismate biosynthesis; chorismate from D-erythrose 4-phosphate and phosphoenolpyruvate: step 4/7. Functionally, involved in the biosynthesis of the chorismate, which leads to the biosynthesis of aromatic amino acids. Catalyzes the reversible NADPH linked reduction of 3-dehydroshikimate (DHSA) to yield shikimate (SA). In Shewanella sp. (strain MR-4), this protein is Shikimate dehydrogenase (NADP(+)).